Reading from the N-terminus, the 290-residue chain is 33 kDa chaperonin (290 aa).

2 cysteine pairs are disulfide-bonded: C235–C237 and C268–C271.

Belongs to the HSP33 family. In terms of processing, under oxidizing conditions two disulfide bonds are formed involving the reactive cysteines. Under reducing conditions zinc is bound to the reactive cysteines and the protein is inactive.

The protein resides in the cytoplasm. Its function is as follows. Redox regulated molecular chaperone. Protects both thermally unfolding and oxidatively damaged proteins from irreversible aggregation. Plays an important role in the bacterial defense system toward oxidative stress. The polypeptide is 33 kDa chaperonin (Streptococcus gordonii (strain Challis / ATCC 35105 / BCRC 15272 / CH1 / DL1 / V288)).